We begin with the raw amino-acid sequence, 226 residues long: UPF0758 protein CHY_0341 (226 aa).

Residues 104–226 (NFLNPDDVYN…YISMKAERLF (123 aa)) form the MPN domain. Residues histidine 175, histidine 177, and aspartate 188 each coordinate Zn(2+). The short motif at 175–188 (HNHPSGDPTPSKED) is the JAMM motif element.

This sequence belongs to the UPF0758 family.

In Carboxydothermus hydrogenoformans (strain ATCC BAA-161 / DSM 6008 / Z-2901), this protein is UPF0758 protein CHY_0341.